Reading from the N-terminus, the 205-residue chain is uncharacterized protein (205 aa).

The segment at 1–42 (MSRKRDKPYTNRHTPARISKRRRPWAPSSSEHDEIIDKPITK) is disordered. A compositionally biased stretch (basic residues) spans 14–24 (TPARISKRRRP). Residues 30-40 (SEHDEIIDKPI) are compositionally biased toward basic and acidic residues. Residues 47–122 (PALVVMGLPA…KKLEVVWATD (76 aa)) form the RRM domain. The tract at residues 170–191 (PRSDNTKGISGDGGISSPATTS) is disordered.

This is an uncharacterized protein from Arabidopsis thaliana (Mouse-ear cress).